We begin with the raw amino-acid sequence, 672 residues long: tRNA 5-methylaminomethyl-2-thiouridine biosynthesis bifunctional protein MnmC (672 aa).

Residues 1 to 243 (MTSITHAELG…KREMIAGCME (243 aa)) form a tRNA (mnm(5)s(2)U34)-methyltransferase region. The segment at 269–672 (IGGGIASAAL…LRKGKAITEL (404 aa)) is FAD-dependent cmnm(5)s(2)U34 oxidoreductase.

The protein in the N-terminal section; belongs to the methyltransferase superfamily. tRNA (mnm(5)s(2)U34)-methyltransferase family. It in the C-terminal section; belongs to the DAO family. It depends on FAD as a cofactor.

It is found in the cytoplasm. It carries out the reaction 5-aminomethyl-2-thiouridine(34) in tRNA + S-adenosyl-L-methionine = 5-methylaminomethyl-2-thiouridine(34) in tRNA + S-adenosyl-L-homocysteine + H(+). In terms of biological role, catalyzes the last two steps in the biosynthesis of 5-methylaminomethyl-2-thiouridine (mnm(5)s(2)U) at the wobble position (U34) in tRNA. Catalyzes the FAD-dependent demodification of cmnm(5)s(2)U34 to nm(5)s(2)U34, followed by the transfer of a methyl group from S-adenosyl-L-methionine to nm(5)s(2)U34, to form mnm(5)s(2)U34. The protein is tRNA 5-methylaminomethyl-2-thiouridine biosynthesis bifunctional protein MnmC of Vibrio vulnificus (strain YJ016).